We begin with the raw amino-acid sequence, 309 residues long: Porphobilinogen deaminase (309 aa).

Cys241 is subject to S-(dipyrrolylmethanemethyl)cysteine.

This sequence belongs to the HMBS family. Monomer. Dipyrromethane is required as a cofactor.

It catalyses the reaction 4 porphobilinogen + H2O = hydroxymethylbilane + 4 NH4(+). It participates in porphyrin-containing compound metabolism; protoporphyrin-IX biosynthesis; coproporphyrinogen-III from 5-aminolevulinate: step 2/4. In terms of biological role, tetrapolymerization of the monopyrrole PBG into the hydroxymethylbilane pre-uroporphyrinogen in several discrete steps. The sequence is that of Porphobilinogen deaminase from Oceanobacillus iheyensis (strain DSM 14371 / CIP 107618 / JCM 11309 / KCTC 3954 / HTE831).